The chain runs to 162 residues: ATP synthase subunit b (162 aa).

Residues 16–36 (GISGGTIIYQLLMFIILLALL) traverse the membrane as a helical segment.

The protein belongs to the ATPase B chain family. In terms of assembly, F-type ATPases have 2 components, F(1) - the catalytic core - and F(0) - the membrane proton channel. F(1) has five subunits: alpha(3), beta(3), gamma(1), delta(1), epsilon(1). F(0) has three main subunits: a(1), b(2) and c(10-14). The alpha and beta chains form an alternating ring which encloses part of the gamma chain. F(1) is attached to F(0) by a central stalk formed by the gamma and epsilon chains, while a peripheral stalk is formed by the delta and b chains.

It localises to the cell membrane. In terms of biological role, f(1)F(0) ATP synthase produces ATP from ADP in the presence of a proton or sodium gradient. F-type ATPases consist of two structural domains, F(1) containing the extramembraneous catalytic core and F(0) containing the membrane proton channel, linked together by a central stalk and a peripheral stalk. During catalysis, ATP synthesis in the catalytic domain of F(1) is coupled via a rotary mechanism of the central stalk subunits to proton translocation. Its function is as follows. Component of the F(0) channel, it forms part of the peripheral stalk, linking F(1) to F(0). The sequence is that of ATP synthase subunit b from Bacillus caldotenax.